The chain runs to 187 residues: Biogenesis of lysosome-related organelles complex 1 subunit 5 (187 aa).

Residues 1-27 are disordered; sequence MSGGGTETPVACEAAQGGGGKKRDSLG. Residue S2 is modified to N-acetylserine.

This sequence belongs to the BLOC1S5 family. Octamer composed of one copy each BLOC1S1, BLOC1S2, BLOC1S3, BLOC1S4, BLOC1S5, BLOC1S6, DTNBP1/BLOC1S7 and SNAPIN/BLOC1S8. The BLOC-1 complex associates with the AP-3 protein complex and membrane protein cargos. Interacts with BLOC1S4, BLOC1S6, DTNBP1/BLOC1S7 and PI4K2A. Component of the biogenesis of lysosome-related organelles complex 1 (BLOC-1) composed of BLOC1S1, BLOC1S2, BLOC1S3, BLOC1S4, BLOC1S5, BLOC1S6, DTNBP1/BLOC1S7 and SNAPIN/BLOC1S8.

In terms of biological role, component of the BLOC-1 complex, a complex that is required for normal biogenesis of lysosome-related organelles (LRO), such as platelet dense granules and melanosomes. In concert with the AP-3 complex, the BLOC-1 complex is required to target membrane protein cargos into vesicles assembled at cell bodies for delivery into neurites and nerve terminals. The BLOC-1 complex, in association with SNARE proteins, is also proposed to be involved in neurite extension. Plays a role in intracellular vesicle trafficking. The polypeptide is Biogenesis of lysosome-related organelles complex 1 subunit 5 (Bloc1s5) (Rattus norvegicus (Rat)).